A 496-amino-acid chain; its full sequence is Maintenance of mitochondrial morphology protein 1 (496 aa).

Over 1 to 22 (MSSQLNDPTPIPAQSSLSFTQG) the chain is Lumenal. The helical transmembrane segment at 23–43 (FLLGQLSVVLLIAAFIKFFIF) threads the bilayer. Residues 44-496 (GEAPPPPSRG…SLPGGGVTTT (453 aa)) are Cytoplasmic-facing. 4 disordered regions span residues 50-96 (PSRG…VPSS), 276-331 (PLDT…KSNV), 395-433 (GRTG…SREP), and 449-496 (DLAS…VTTT). Residues 54–64 (LSHRSATHRRS) are compositionally biased toward basic residues. Residues 65 to 74 (NSIYSSTQHD) are compositionally biased toward polar residues. Over residues 75–84 (GNTRTLREKP) the composition is skewed to basic and acidic residues. Residues 85–96 (SNSNVLRPVPSS) are compositionally biased toward polar residues. The 258-residue stretch at 131–388 (QPESLDWFNV…EPRVQVVGLP (258 aa)) folds into the SMP-LTD domain. Pro residues predominate over residues 276-287 (PLDTPSHSPSPP). The span at 407–418 (TGSNAPRSSTAA) shows a compositional bias: polar residues. Basic and acidic residues-rich tracts occupy residues 424 to 433 (AHHEDSSREP) and 462 to 474 (GDLR…REES).

This sequence belongs to the MMM1 family. In terms of assembly, homodimer. Component of the ER-mitochondria encounter structure (ERMES) or MDM complex, composed of mmm1, mdm10, mdm12 and mdm34. A mmm1 homodimer associates with one molecule of mdm12 on each side in a pairwise head-to-tail manner, and the SMP-LTD domains of mmm1 and mdm12 generate a continuous hydrophobic tunnel for phospholipid trafficking.

The protein resides in the endoplasmic reticulum membrane. Its function is as follows. Component of the ERMES/MDM complex, which serves as a molecular tether to connect the endoplasmic reticulum (ER) and mitochondria. Components of this complex are involved in the control of mitochondrial shape and protein biogenesis, and function in nonvesicular lipid trafficking between the ER and mitochondria. The mdm12-mmm1 subcomplex functions in the major beta-barrel assembly pathway that is responsible for biogenesis of all outer membrane beta-barrel proteins, and acts in a late step after the SAM complex. The mdm10-mdm12-mmm1 subcomplex further acts in the TOM40-specific pathway after the action of the mdm12-mmm1 complex. Essential for establishing and maintaining the structure of mitochondria and maintenance of mtDNA nucleoids. In Neosartorya fischeri (strain ATCC 1020 / DSM 3700 / CBS 544.65 / FGSC A1164 / JCM 1740 / NRRL 181 / WB 181) (Aspergillus fischerianus), this protein is Maintenance of mitochondrial morphology protein 1.